The sequence spans 235 residues: Exosome complex component RRP46 (235 aa).

The interval 1–21 (MEGAKRADANLLTDTGTESSP) is disordered. Residues 12 to 21 (LTDTGTESSP) are compositionally biased toward polar residues. S20 and S23 each carry phosphoserine.

This sequence belongs to the RNase PH family. In terms of assembly, homodimer. Component of the RNA exosome core complex (Exo-9), composed of EXOSC1, EXOSC2, EXOSC3, EXOSC4, EXOSC5, EXOSC6, EXOSC7, EXOSC8 and EXOSC9; within the complex interacts with EXOSC3, EXOSC8, and EXOSC9. The catalytically inactive RNA exosome core complex (Exo-9) associates with the catalytic subunit EXOSC10/RRP6. Exo-9 may associate with DIS3 to form the nucleolar exosome complex, or DIS3L to form the cytoplasmic exosome complex. Exo-9 is formed by a hexameric base ring consisting of the heterodimers EXOSC4-EXOSC9, EXOSC5-EXOSC8 and EXOSC6-EXOSC7, and a cap ring consisting of EXOSC1, EXOSC2 and EXOSC3. The RNA exosome complex associates with cofactors C1D/RRP47, MPHOSPH6/MPP6 and MTREX/MTR4. Interacts with GTPBP1. Interacts with ZC3HAV1. Interacts with DDX17 only in the presence of ZC3HAV1 in an RNA-independent manner.

The protein resides in the nucleus. The protein localises to the nucleolus. It is found in the cytoplasm. Its function is as follows. Non-catalytic component of the RNA exosome complex which has 3'-&gt;5' exoribonuclease activity and participates in a multitude of cellular RNA processing and degradation events. In the nucleus, the RNA exosome complex is involved in proper maturation of stable RNA species such as rRNA, snRNA and snoRNA, in the elimination of RNA processing by-products and non-coding 'pervasive' transcripts, such as antisense RNA species and promoter-upstream transcripts (PROMPTs), and of mRNAs with processing defects, thereby limiting or excluding their export to the cytoplasm. The RNA exosome may be involved in Ig class switch recombination (CSR) and/or Ig variable region somatic hypermutation (SHM) by targeting AICDA deamination activity to transcribed dsDNA substrates. In the cytoplasm, the RNA exosome complex is involved in general mRNA turnover and specifically degrades inherently unstable mRNAs containing AU-rich elements (AREs) within their 3' untranslated regions, and in RNA surveillance pathways, preventing translation of aberrant mRNAs. It seems to be involved in degradation of histone mRNA. The catalytic inactive RNA exosome core complex of 9 subunits (Exo-9) is proposed to play a pivotal role in the binding and presentation of RNA for ribonucleolysis, and to serve as a scaffold for the association with catalytic subunits and accessory proteins or complexes. In vitro, EXOSC5 does not bind or digest single-stranded RNA and binds to double-stranded DNA without detectable DNase activity. In Mus musculus (Mouse), this protein is Exosome complex component RRP46 (Exosc5).